Consider the following 387-residue polypeptide: Ferrochelatase (387 aa).

Positions 196 and 277 each coordinate Fe cation.

The protein belongs to the ferrochelatase family.

It localises to the cytoplasm. It carries out the reaction heme b + 2 H(+) = protoporphyrin IX + Fe(2+). It participates in porphyrin-containing compound metabolism; protoheme biosynthesis; protoheme from protoporphyrin-IX: step 1/1. In terms of biological role, catalyzes the ferrous insertion into protoporphyrin IX. The sequence is that of Ferrochelatase from Synechococcus elongatus (strain ATCC 33912 / PCC 7942 / FACHB-805) (Anacystis nidulans R2).